Here is a 122-residue protein sequence, read N- to C-terminus: Large ribosomal subunit protein uL14 (122 aa).

Belongs to the universal ribosomal protein uL14 family. Part of the 50S ribosomal subunit. Forms a cluster with proteins L3 and L19. In the 70S ribosome, L14 and L19 interact and together make contacts with the 16S rRNA in bridges B5 and B8.

Binds to 23S rRNA. Forms part of two intersubunit bridges in the 70S ribosome. The sequence is that of Large ribosomal subunit protein uL14 from Rickettsia bellii (strain OSU 85-389).